A 393-amino-acid polypeptide reads, in one-letter code: Telomeric repeat-binding factor 2-interacting protein 1 (393 aa).

An N-acetylalanine modification is found at Ala2. In terms of domain architecture, BRCT spans 10–101 (DPNGPTHSST…EKLELEAYRL (92 aa)). 2 positions are modified to phosphoserine: Ser36 and Ser43. The tract at residues 104–132 (TEQASDPKPGASAEGSTEPEPQPLTGRIA) is disordered. Lys111 is covalently cross-linked (Glycyl lysine isopeptide (Lys-Gly) (interchain with G-Cter in SUMO2)). The region spanning 125 to 185 (QPLTGRIAYT…SLKDRYLKHL (61 aa)) is the Myb-like domain. Phosphoserine occurs at positions 151 and 153. Lys191 participates in a covalent cross-link: Glycyl lysine isopeptide (Lys-Gly) (interchain with G-Cter in SUMO2). 2 disordered regions span residues 194-248 (LGNA…EADN) and 272-305 (HITM…TQEV). Residues Ser200 and Ser203 each carry the phosphoserine modification. Residues Lys205, Lys209, and Lys237 each participate in a glycyl lysine isopeptide (Lys-Gly) (interchain with G-Cter in SUMO2) cross-link. A compositionally biased stretch (basic and acidic residues) spans 223-248 (QNKRTPDLPEEECVKGETKENGEADN). Acidic residues predominate over residues 282–297 (TPEEDSETQPDEEEEE). Lys366 participates in a covalent cross-link: Glycyl lysine isopeptide (Lys-Gly) (interchain with G-Cter in SUMO2). Residues 377 to 393 (KKYGAQNVARRIEFRKK) carry the Nuclear localization signal motif.

The protein belongs to the RAP1 family. Associates with the I-kappa-B-kinase (IKK) core complex, composed of CHUK, IKBKB and IKBKG. Homodimer. Component of the shelterin complex (telosome) composed of TERF1, TERF2, TINF2, TERF2IP ACD and POT1. Interacts with TERF2 (but not TERF1) with its C-terminus. Interacts with SLX4/BTBD12. Interacts with TERF2; the interaction is direct.

It is found in the nucleus. Its subcellular location is the cytoplasm. The protein localises to the chromosome. The protein resides in the telomere. Its function is as follows. Acts both as a regulator of telomere function and as a transcription regulator. Involved in the regulation of telomere length and protection as a component of the shelterin complex (telosome). In contrast to other components of the shelterin complex, it is dispensible for telomere capping and does not participate in the protection of telomeres against non-homologous end-joining (NHEJ)-mediated repair. Instead, it is required to negatively regulate telomere recombination and is essential for repressing homology-directed repair (HDR), which can affect telomere length. Does not bind DNA directly: recruited to telomeric double-stranded 5'-TTAGGG-3' repeats via its interaction with TERF2. Independently of its function in telomeres, also acts as a transcription regulator: recruited to extratelomeric 5'-TTAGGG-3' sites via its association with TERF2 or other factors, and regulates gene expression. When cytoplasmic, associates with the I-kappa-B-kinase (IKK) complex and acts as a regulator of the NF-kappa-B signaling by promoting IKK-mediated phosphorylation of RELA/p65, leading to activate expression of NF-kappa-B target genes. The sequence is that of Telomeric repeat-binding factor 2-interacting protein 1 (Terf2ip) from Rattus norvegicus (Rat).